A 136-amino-acid chain; its full sequence is uncharacterized protein (136 aa).

A helical membrane pass occupies residues 7-27 (ANVLAILLVSLFLINGLVFLS).

The protein resides in the membrane. This is an uncharacterized protein from Mycoplasma pneumoniae (strain ATCC 29342 / M129 / Subtype 1) (Mycoplasmoides pneumoniae).